The following is a 446-amino-acid chain: Maltoporin (446 aa).

The signal sequence occupies residues 1–25; the sequence is MMITLRKLPLAVAVAAGVMSAQAMA.

Belongs to the porin LamB (TC 1.B.3) family. In terms of assembly, homotrimer formed of three 18-stranded antiparallel beta-barrels, containing three independent channels.

The protein resides in the cell outer membrane. The enzyme catalyses beta-maltose(in) = beta-maltose(out). Its function is as follows. Involved in the transport of maltose and maltodextrins. The protein is Maltoporin of Escherichia coli O8 (strain IAI1).